The following is a 231-amino-acid chain: Large ribosomal subunit protein uL1 (231 aa).

This sequence belongs to the universal ribosomal protein uL1 family. As to quaternary structure, part of the 50S ribosomal subunit.

Functionally, binds directly to 23S rRNA. The L1 stalk is quite mobile in the ribosome, and is involved in E site tRNA release. Its function is as follows. Protein L1 is also a translational repressor protein, it controls the translation of the L11 operon by binding to its mRNA. This Nitrosococcus oceani (strain ATCC 19707 / BCRC 17464 / JCM 30415 / NCIMB 11848 / C-107) protein is Large ribosomal subunit protein uL1.